A 399-amino-acid chain; its full sequence is Transferrin receptor subunit ESAG6 (399 aa).

Residues 1-17 (MRFWFVLLALLGKEIYA) form the signal peptide. N-linked (GlcNAc...) asparagine glycans are attached at residues Asn-26 and Asn-110. 3 cysteine pairs are disulfide-bonded: Cys-34–Cys-161, Cys-84–Cys-312, and Cys-144–Cys-215. N-linked (GlcNAc...) asparagine glycosylation is found at Asn-235, Asn-250, and Asn-360. The GPI-anchor amidated asparagine moiety is linked to residue Asn-376. Residues 377–399 (AAAIHLSVSTAALCRSALLLGVL) constitute a propeptide, removed in mature form.

In terms of assembly, heterodimer composed of ESAG6 and ESAG7. In terms of processing, N-glycosylated. Glycosylation is dispensable for heterodimer formation and host transferrin binding.

The protein localises to the cell membrane. The protein resides in the flagellar pocket. Its function is as follows. Transferrin receptor subunit involved in receptor-mediated acquisition of iron from the environment by binding host TF/transferrin. The polypeptide is Transferrin receptor subunit ESAG6 (Trypanosoma brucei brucei).